Reading from the N-terminus, the 87-residue chain is Large ribosomal subunit protein bL27 (87 aa).

The segment at 1-21 (MAHKKAGGSSRNGRDSESKRL) is disordered.

Belongs to the bacterial ribosomal protein bL27 family.

The chain is Large ribosomal subunit protein bL27 from Burkholderia multivorans (strain ATCC 17616 / 249).